The sequence spans 86 residues: Small ribosomal subunit protein bS20 (86 aa).

The tract at residues 1 to 25 (MANSASSRKRARQAVKRNKHNSQIR) is disordered. Residues 7–25 (SRKRARQAVKRNKHNSQIR) show a composition bias toward basic residues.

This sequence belongs to the bacterial ribosomal protein bS20 family.

Functionally, binds directly to 16S ribosomal RNA. The sequence is that of Small ribosomal subunit protein bS20 from Vesicomyosocius okutanii subsp. Calyptogena okutanii (strain HA).